The chain runs to 204 residues: Small ribosomal subunit protein uS4 (204 aa).

In terms of domain architecture, S4 RNA-binding spans 94 to 157 (RRLDNVVYRL…KKLEVFKENL (64 aa)).

It belongs to the universal ribosomal protein uS4 family. As to quaternary structure, part of the 30S ribosomal subunit. Contacts protein S5. The interaction surface between S4 and S5 is involved in control of translational fidelity.

In terms of biological role, one of the primary rRNA binding proteins, it binds directly to 16S rRNA where it nucleates assembly of the body of the 30S subunit. With S5 and S12 plays an important role in translational accuracy. This chain is Small ribosomal subunit protein uS4, found in Sulfurihydrogenibium sp. (strain YO3AOP1).